We begin with the raw amino-acid sequence, 707 residues long: Heat shock protein hsp88 (707 aa).

A compositionally biased stretch (basic and acidic residues) spans 662–692; the sequence is EAEKAAKKAEEEARKAKEAAEKAAQEGAKDD. Residues 662-707 form a disordered region; that stretch reads EAEKAAKKAEEEARKAKEAAEKAAQEGAKDDEMTDADAPKPVVEEA.

It belongs to the heat shock protein 70 family. Binds hsp30 independent of temperature or substrate. Post-translationally, the N-terminus is blocked.

Its subcellular location is the cytoplasm. This is Heat shock protein hsp88 (hsp88) from Neurospora crassa (strain ATCC 24698 / 74-OR23-1A / CBS 708.71 / DSM 1257 / FGSC 987).